The sequence spans 323 residues: CD-NTase-associated protein 12 (323 aa).

A TIR domain is found at 4–120 (RIFIGSSSEQ…LDGITVAKFT (117 aa)). Glu-84 is an active-site residue. Positions 154–323 (STALAIGYYN…YVNVLTNVKL (170 aa)) are STING domain. 3',3'-c-di-GMP contacts are provided by Ser-164, Phe-165, Arg-234, Pro-237, Asp-259, Ser-262, and Thr-263.

The protein in the C-terminal section; belongs to the bacterial STING family. Forms homodimers which subsequently form filaments. In vitro in the presence of c-di-GMP forms filaments up to 300 nm in length with an ordered array of parallel-stacked subunits, where the TIR domains form one face of the filament and the STING domains form the other face. Antiparallel double-filament structures are also seen. 3'3'-cGAMP weakly induces filament formation, while 2'3'-cGAMP does not.

It carries out the reaction NAD(+) + H2O = ADP-D-ribose + nicotinamide + H(+). With respect to regulation, NAD(+) hydrolase activity is strongly stimulated by c-di-GMP, weakly by 3'3'-cGAMP, very weakly by c-di-AMP and not at all by 2'3'-cGAMP. Self-association of TIR domains is required for NADase activity. Effector protein of a CBASS antiviral system with NAD(+) hydrolase activity. CBASS (cyclic oligonucleotide-based antiphage signaling system) provides immunity against bacteriophage. The CD-NTase protein synthesizes cyclic nucleotides in response to infection; these serve as specific second messenger signals. The signals activate a diverse range of effectors, leading to bacterial cell death and thus abortive phage infection. A type I-D(GG) CBASS system. In terms of biological role, upon activation by 3'3'-c-di-GMP forms filaments which hydrolyze NAD(+); filament formation is required for enzyme activation. Induction in an E.coli strain that synthesizes c-di-GMP leads to significant growth inhibition. Binds c-di-GMP and 3'3'-cGAMP (3'3'-cyclic GMP-AMP), but not c-di-AMP, 2'3'-cGAMP or cUMP-AMP. This chain is CD-NTase-associated protein 12, found in Sphingobacterium faecium (strain DSM 11690 / JCM 21820 / NBRC 15299 / NCIMB 13408 / KS 0470).